A 177-amino-acid polypeptide reads, in one-letter code: Putative peroxiredoxin (177 aa).

In terms of domain architecture, Thioredoxin spans 8 to 177; the sequence is TAKGNEIPDT…ASIDTILTKV (170 aa). Cys64 serves as the catalytic Cysteine sulfenic acid (-SOH) intermediate. The short motif at 175-177 is the Microbody targeting signal element; the sequence is TKV.

This sequence belongs to the peroxiredoxin family. Prx5 subfamily. Homodimer; disulfide-linked, upon oxidation.

The catalysed reaction is a hydroperoxide + [thioredoxin]-dithiol = an alcohol + [thioredoxin]-disulfide + H2O. In terms of biological role, thiol-specific peroxidase that catalyzes the reduction of hydrogen peroxide and organic hydroperoxides to water and alcohols, respectively. Plays a role in cell protection against oxidative stress by detoxifying peroxides and as sensor of hydrogen peroxide-mediated signaling events. In Malassezia furfur (Pityriasis versicolor infection agent), this protein is Putative peroxiredoxin.